The sequence spans 89 residues: Ixosin-B (89 aa).

The first 26 residues, 1–26 (MASGWTHRLLLLAAVVTLGATPIAAA), serve as a signal peptide directing secretion. Residues 27 to 57 (SMEYLVTAPGYLTPNADIKITAVVTNPSSAG) constitute a propeptide that is removed on maturation. The disordered stretch occupies residues 68-89 (SGIQPEQHSSGKSDVRRWRSRY). Residues 76 to 89 (SSGKSDVRRWRSRY) show a composition bias toward basic and acidic residues.

Its function is as follows. Has antifungal activity against C.albicans. Has antibacterial activity against the Gram-positive bacterium S.aureus and the Gram-negative bacterium E.coli. Lacks hemolytic activity against rabbit erythrocytes. The sequence is that of Ixosin-B from Ixodes sinensis (Hard tick).